The sequence spans 368 residues: Agmatine deiminase (368 aa).

C357 (amidino-cysteine intermediate) is an active-site residue.

Belongs to the agmatine deiminase family. Homodimer.

The catalysed reaction is agmatine + H2O = N-carbamoylputrescine + NH4(+). Its pathway is amine and polyamine biosynthesis; putrescine biosynthesis via agmatine pathway; N-carbamoylputrescine from agmatine: step 1/1. Mediates the hydrolysis of agmatine into N-carbamoylputrescine in the arginine decarboxylase (ADC) pathway of putrescine biosynthesis, a basic polyamine. This chain is Agmatine deiminase, found in Pseudomonas aeruginosa (strain LESB58).